The chain runs to 139 residues: Nucleoside diphosphate kinase (139 aa).

The ATP site is built by K10, F58, R86, T92, R104, and N114. The active-site Pros-phosphohistidine intermediate is the H117.

This sequence belongs to the NDK family. As to quaternary structure, homotetramer. The cofactor is Mg(2+).

It localises to the cytoplasm. The enzyme catalyses a 2'-deoxyribonucleoside 5'-diphosphate + ATP = a 2'-deoxyribonucleoside 5'-triphosphate + ADP. The catalysed reaction is a ribonucleoside 5'-diphosphate + ATP = a ribonucleoside 5'-triphosphate + ADP. Major role in the synthesis of nucleoside triphosphates other than ATP. The ATP gamma phosphate is transferred to the NDP beta phosphate via a ping-pong mechanism, using a phosphorylated active-site intermediate. The chain is Nucleoside diphosphate kinase from Nocardia farcinica (strain IFM 10152).